The sequence spans 498 residues: ATP synthase subunit beta, chloroplastic (498 aa).

An ATP-binding site is contributed by 172–179 (GGAGVGKT).

Belongs to the ATPase alpha/beta chains family. As to quaternary structure, F-type ATPases have 2 components, CF(1) - the catalytic core - and CF(0) - the membrane proton channel. CF(1) has five subunits: alpha(3), beta(3), gamma(1), delta(1), epsilon(1). CF(0) has four main subunits: a(1), b(1), b'(1) and c(9-12).

Its subcellular location is the plastid. It localises to the chloroplast thylakoid membrane. It catalyses the reaction ATP + H2O + 4 H(+)(in) = ADP + phosphate + 5 H(+)(out). In terms of biological role, produces ATP from ADP in the presence of a proton gradient across the membrane. The catalytic sites are hosted primarily by the beta subunits. The chain is ATP synthase subunit beta, chloroplastic from Atropa belladonna (Belladonna).